The sequence spans 361 residues: MLYNLLLPYIHNSHIANLFHYITFRSGLAVLVTLSLSFLIGPRLIKFLQTLQKYGQPIRLDGPESHQAKAGTPTMGGIMIILSSCFSTLLLADLTNKYIWITLFGFVSFGIIGFLDDYAKVTKNNHYGVKGKSKLLLQGIISLIVCILLEYTIDSPSHMLNVPFFKSLSMDLGYLYIFFAIFVIVGASNAVNLTDGLDGLATVPIALTAGSFALISYLVGNLIYSNYLQLTYLPNTGELTIFCASIVGSCLGFLWFNAQPAEVFMGDTGSLSLGGVLGIISVITKHEIVLGIVGGLFVIETISVIMQVYYFKATKGKRIFKMAPLHHHFEKSGWTESKVVIRFWIISLIFVLIGLSSLKLR.

10 consecutive transmembrane segments (helical) span residues 28 to 48 (LAVL…IKFL), 74 to 94 (TMGG…LADL), 99 to 119 (IWIT…DDYA), 135 to 155 (LLLQ…TIDS), 167 to 187 (SLSM…IVGA), 203 to 223 (VPIA…GNLI), 236 to 256 (TGEL…FLWF), 263 to 283 (VFMG…ISVI), 288 to 308 (IVLG…IMQV), and 338 to 358 (KVVI…LSSL).

The protein belongs to the glycosyltransferase 4 family. MraY subfamily. Mg(2+) serves as cofactor.

Its subcellular location is the cell inner membrane. The catalysed reaction is UDP-N-acetyl-alpha-D-muramoyl-L-alanyl-gamma-D-glutamyl-meso-2,6-diaminopimeloyl-D-alanyl-D-alanine + di-trans,octa-cis-undecaprenyl phosphate = di-trans,octa-cis-undecaprenyl diphospho-N-acetyl-alpha-D-muramoyl-L-alanyl-D-glutamyl-meso-2,6-diaminopimeloyl-D-alanyl-D-alanine + UMP. The protein operates within cell wall biogenesis; peptidoglycan biosynthesis. Catalyzes the initial step of the lipid cycle reactions in the biosynthesis of the cell wall peptidoglycan: transfers peptidoglycan precursor phospho-MurNAc-pentapeptide from UDP-MurNAc-pentapeptide onto the lipid carrier undecaprenyl phosphate, yielding undecaprenyl-pyrophosphoryl-MurNAc-pentapeptide, known as lipid I. In Rickettsia bellii (strain RML369-C), this protein is Phospho-N-acetylmuramoyl-pentapeptide-transferase.